The following is a 405-amino-acid chain: Arginine biosynthesis bifunctional protein ArgJ (405 aa).

Positions 152, 178, 189, 276, 400, and 405 each coordinate substrate. Threonine 189 serves as the catalytic Nucleophile.

It belongs to the ArgJ family. As to quaternary structure, heterotetramer of two alpha and two beta chains.

It is found in the cytoplasm. The enzyme catalyses N(2)-acetyl-L-ornithine + L-glutamate = N-acetyl-L-glutamate + L-ornithine. The catalysed reaction is L-glutamate + acetyl-CoA = N-acetyl-L-glutamate + CoA + H(+). Its pathway is amino-acid biosynthesis; L-arginine biosynthesis; L-ornithine and N-acetyl-L-glutamate from L-glutamate and N(2)-acetyl-L-ornithine (cyclic): step 1/1. It functions in the pathway amino-acid biosynthesis; L-arginine biosynthesis; N(2)-acetyl-L-ornithine from L-glutamate: step 1/4. Its function is as follows. Catalyzes two activities which are involved in the cyclic version of arginine biosynthesis: the synthesis of N-acetylglutamate from glutamate and acetyl-CoA as the acetyl donor, and of ornithine by transacetylation between N(2)-acetylornithine and glutamate. The sequence is that of Arginine biosynthesis bifunctional protein ArgJ from Pseudomonas fluorescens (strain Pf0-1).